Consider the following 710-residue polypeptide: Cyclomaltodextrin glucanotransferase (710 aa).

An N-terminal signal peptide occupies residues M1–A27. The Ca(2+) site is built by D54, N56, N59, N60, G78, and D80. Y128–W129 serves as a coordination point for substrate. A Ca(2+)-binding site is contributed by N167. H168 contributes to the substrate binding site. I218 is a Ca(2+) binding site. N221–D224 provides a ligand contact to substrate. Position 227 (D227) interacts with Ca(2+). Residue R255 participates in substrate binding. D257 (nucleophile) is an active-site residue. A substrate-binding site is contributed by K260–H261. H261 contributes to the Ca(2+) binding site. E285 acts as the Proton donor in catalysis. Residues H355, D398, and R402 each coordinate substrate. The IPT/TIG domain occupies P526–I603. The CBM20 domain maps to I605–Q710.

The protein belongs to the glycosyl hydrolase 13 family. The cofactor is Ca(2+).

Its subcellular location is the secreted. The catalysed reaction is Cyclizes part of a (1-&gt;4)-alpha-D-glucan chain by formation of a (1-&gt;4)-alpha-D-glucosidic bond.. Functionally, degrades starch to alpha-, beta-, and gamma-cyclodextrins, as well as linear sugars. This Thermoanaerobacterium thermosulfurigenes (Clostridium thermosulfurogenes) protein is Cyclomaltodextrin glucanotransferase (amyA).